Reading from the N-terminus, the 413-residue chain is Serine/threonine-protein kinase ppk27 (413 aa).

One can recognise a Protein kinase domain in the interval 102–403 (WSINTKITST…LKDFNKHGNF (302 aa)). ATP-binding positions include 108–116 (ITSTEQREV) and Lys133. The active-site Proton acceptor is Asp231.

It belongs to the protein kinase superfamily. Ser/Thr protein kinase family.

The protein resides in the cytoplasm. It catalyses the reaction L-seryl-[protein] + ATP = O-phospho-L-seryl-[protein] + ADP + H(+). It carries out the reaction L-threonyl-[protein] + ATP = O-phospho-L-threonyl-[protein] + ADP + H(+). This Schizosaccharomyces pombe (strain 972 / ATCC 24843) (Fission yeast) protein is Serine/threonine-protein kinase ppk27 (ppk27).